The primary structure comprises 185 residues: Ribosome-recycling factor (185 aa).

The disordered stretch occupies residues 138–157 (ELKKLEKDHTASEDEVKRAQ).

Belongs to the RRF family.

It is found in the cytoplasm. Responsible for the release of ribosomes from messenger RNA at the termination of protein biosynthesis. May increase the efficiency of translation by recycling ribosomes from one round of translation to another. The polypeptide is Ribosome-recycling factor (Desulfitobacterium hafniense (strain DSM 10664 / DCB-2)).